The sequence spans 219 residues: Ribose-5-phosphate isomerase A (219 aa).

Substrate-binding positions include 28–31 (TGST), 81–84 (DGAD), and 94–97 (KGGG). The active-site Proton acceptor is E103. K121 contributes to the substrate binding site.

It belongs to the ribose 5-phosphate isomerase family. As to quaternary structure, homodimer.

The catalysed reaction is aldehydo-D-ribose 5-phosphate = D-ribulose 5-phosphate. It participates in carbohydrate degradation; pentose phosphate pathway; D-ribose 5-phosphate from D-ribulose 5-phosphate (non-oxidative stage): step 1/1. In terms of biological role, catalyzes the reversible conversion of ribose-5-phosphate to ribulose 5-phosphate. The protein is Ribose-5-phosphate isomerase A of Shewanella pealeana (strain ATCC 700345 / ANG-SQ1).